The following is a 241-amino-acid chain: Large ribosomal subunit protein uL3 (241 aa).

Disordered regions lie at residues 140 to 168 (SHRS…HMGD) and 216 to 241 (APKP…EEGA). An N5-methylglutamine modification is found at Gln151.

It belongs to the universal ribosomal protein uL3 family. In terms of assembly, part of the 50S ribosomal subunit. Forms a cluster with proteins L14 and L19. In terms of processing, methylated by PrmB.

In terms of biological role, one of the primary rRNA binding proteins, it binds directly near the 3'-end of the 23S rRNA, where it nucleates assembly of the 50S subunit. The chain is Large ribosomal subunit protein uL3 from Xanthobacter autotrophicus (strain ATCC BAA-1158 / Py2).